Consider the following 192-residue polypeptide: NOP protein chaperone 1 (192 aa).

Positions 1-26 are enriched in low complexity; it reads MEVSGESHSGPSCSSSSRDGSGVSVS. A disordered region spans residues 1–39; that stretch reads MEVSGESHSGPSCSSSSRDGSGVSVSKELLMAGSGGRGG. Phosphoserine occurs at positions 34 and 66. The tract at residues 118–192 is disordered; the sequence is FEMNQSHSKE…SENKEKQENK (75 aa). Residues 129-152 are compositionally biased toward acidic residues; it reads DSSEENSQDSSEESSESEDEDDST. Basic and acidic residues predominate over residues 164 to 177; sequence KLPHSEDGKGKIEV. Serine 180 is modified (phosphoserine).

As to quaternary structure, interacts with NOP58, RUVBL1 and RUVBL2; the interactions are direct and NOPCHAP1 bridges the association of NOP58 with RUVBL1:RUVBL2 even in absence of snoRNAs. The interactions with RUVBL1 and RUVBL2 are disrupted upon ATP binding.

It is found in the nucleus. Client-loading PAQosome/R2TP complex cofactor that selects NOP58 to promote box C/D small nucleolar ribonucleoprotein (snoRNP) assembly. Acts as a bridge between NOP58 and the R2TP complex via RUVBL1:RUVBL2. The sequence is that of NOP protein chaperone 1 (NOPCHAP1) from Bos taurus (Bovine).